The chain runs to 573 residues: Probable CoA ligase CCL13 (573 aa).

ATP is bound by residues 216–224, 352–357, Asp449, 461–464, and Lys556; these read TSGTTARPK, HIYGLT, and LKDR. An SBD1 region spans residues 284–352; sequence SPKAIFDNIH…MEEMGFQVNH (69 aa). The tract at residues 353–429 is SBD2; sequence IYGLTETHGP…FRGNTVMSGY (77 aa).

The protein belongs to the ATP-dependent AMP-binding enzyme family.

It is found in the cytoplasm. Its subcellular location is the cytosol. This is Probable CoA ligase CCL13 from Humulus lupulus (European hop).